The following is a 120-amino-acid chain: Small ribosomal subunit protein uS12 (120 aa).

3-methylthioaspartic acid is present on Asp-88.

Belongs to the universal ribosomal protein uS12 family. As to quaternary structure, part of the 30S ribosomal subunit. Contacts proteins S8 and S17. May interact with IF1 in the 30S initiation complex.

In terms of biological role, with S4 and S5 plays an important role in translational accuracy. Interacts with and stabilizes bases of the 16S rRNA that are involved in tRNA selection in the A site and with the mRNA backbone. Located at the interface of the 30S and 50S subunits, it traverses the body of the 30S subunit contacting proteins on the other side and probably holding the rRNA structure together. The combined cluster of proteins S8, S12 and S17 appears to hold together the shoulder and platform of the 30S subunit. This is Small ribosomal subunit protein uS12 from Carsonella ruddii (strain PV).